Consider the following 205-residue polypeptide: RNA pyrophosphohydrolase (205 aa).

One can recognise a Nudix hydrolase domain in the interval 6-149 (GFRPNVGIVL…KRGVYARALR (144 aa)). The Nudix box signature appears at 38–59 (GGMNTDETPVEAMYRELREETG). The segment at 178–205 (GSSAAGHDRPRKRPRKRGGVLPVRINND) is disordered. Basic residues predominate over residues 186-195 (RPRKRPRKRG).

It belongs to the Nudix hydrolase family. RppH subfamily. Requires a divalent metal cation as cofactor.

In terms of biological role, accelerates the degradation of transcripts by removing pyrophosphate from the 5'-end of triphosphorylated RNA, leading to a more labile monophosphorylated state that can stimulate subsequent ribonuclease cleavage. This chain is RNA pyrophosphohydrolase, found in Xanthomonas campestris pv. campestris (strain 8004).